The following is a 271-amino-acid chain: L-aspartate dehydrogenase (271 aa).

NAD(+) contacts are provided by Ala124 and Asn192. His222 is a catalytic residue.

The protein belongs to the L-aspartate dehydrogenase family.

It carries out the reaction L-aspartate + NADP(+) + H2O = oxaloacetate + NH4(+) + NADPH + H(+). The catalysed reaction is L-aspartate + NAD(+) + H2O = oxaloacetate + NH4(+) + NADH + H(+). It participates in cofactor biosynthesis; NAD(+) biosynthesis; iminoaspartate from L-aspartate (dehydrogenase route): step 1/1. Specifically catalyzes the NAD or NADP-dependent dehydrogenation of L-aspartate to iminoaspartate. The chain is L-aspartate dehydrogenase from Methanosarcina barkeri (strain Fusaro / DSM 804).